The primary structure comprises 478 residues: Proline--tRNA ligase (478 aa).

This sequence belongs to the class-II aminoacyl-tRNA synthetase family. ProS type 3 subfamily. As to quaternary structure, homodimer.

The protein localises to the cytoplasm. The catalysed reaction is tRNA(Pro) + L-proline + ATP = L-prolyl-tRNA(Pro) + AMP + diphosphate. Catalyzes the attachment of proline to tRNA(Pro) in a two-step reaction: proline is first activated by ATP to form Pro-AMP and then transferred to the acceptor end of tRNA(Pro). The protein is Proline--tRNA ligase of Clostridium botulinum (strain ATCC 19397 / Type A).